Consider the following 772-residue polypeptide: Transcription factor sdnS (772 aa).

A DNA-binding region (zn(2)-C6 fungal-type) is located at residues 23 to 53 (CWECRRRKIRCQFGAGNDTVCLPCQARGSTC). Disordered regions lie at residues 94 to 121 (EAGGQLANRSTTQSNRGSRSPSPDSAQN) and 156 to 180 (ASMLTPESDHSPAPSKLTPSRNSKT). Residues 100 to 121 (ANRSTTQSNRGSRSPSPDSAQN) are compositionally biased toward polar residues.

Its subcellular location is the nucleus. Its pathway is antibiotic biosynthesis. Its function is as follows. Transcription factor; part of the gene cluster that mediates the biosynthesis of sordarin and hypoxysordarin, glycoside antibiotics with a unique tetracyclic diterpene aglycone structure. First, the geranylgeranyl diphosphate synthase sdnC constructs GGDP from farnesyl diphosphate and isopentenyl diphosphate. The diterpene cyclase sdnA then catalyzes the cyclization of GGDP to afford cycloaraneosene. Cycloaraneosene is then hydroxylated four times by the putative cytochrome P450 monooxygenases sdnB, sdnE, sdnF and sdnH to give a hydroxylated cycloaraneosene derivative such as cycloaraneosene-8,9,13,19-tetraol. Although the order of the hydroxylations is unclear, at least C8, C9 and C13 of the cycloaraneosene skeleton are hydroxylated before the sordaricin formation. Dehydration of the 13-hydroxy group of the hydroxylated cycloaraneosene derivative might be catalyzed by an unassigned hypothetical protein such as sdnG and sdnP to construct the cyclopentadiene moiety. The FAD-dependent oxidoreductase sdnN is proposed to catalyze the oxidation at C9 of the hydroxylated cycloaraneosene derivative and also catalyze the Baeyer-Villiger oxidation to give the lactone intermediate. The presumed lactone intermediate would be hydrolyzed to give an acrolein moiety and a carboxylate moiety. Then, [4+2]cycloaddition would occur between the acrolein moiety and the cyclopentadiene moiety to give sordaricin. SdnN might also be involved in the [4+2]cycloaddition after the hypothesized oxidation to accommodate the oxidized product and prompt the [4+2]cycloaddition. GDP-6-deoxy-D-altrose may be biosynthesized from GDP-D-mannose by the putative GDP-mannose-4,6-dehydratase sdnI and the short-chain dehydrogenase sdnK. The glycosyltransferase sdnJ catalyzes the attachment of 6-deoxy-D-altrose onto the 19-hydroxy group of sordaricin to give 4'-O-demethylsordarin. The methyltransferase sdnD would complete the biosynthesis of sordarin. Sordarin can be further modified into hypoxysordarin. The unique acyl chain at the 3'-hydroxy group of hypoxysordarin would be constructed by an iterative type I PKS sdnO and the trans-acting polyketide methyltransferase sdnL. SdnL would be responsible for the introduction of an alpha-methyl group of the polyketide chain. Alternatively, the beta-lactamase-like protein sdnR might be responsible for the cleavage and transfer of the polyketide chain from the PKS sdnO to sordarin. Two putative cytochrome P450 monooxygenases, sdnQ and sdnT, might catalyze the epoxidations of the polyketide chain to complete the biosynthesis of hypoxysordarin. Transcriptional regulators sdnM and sdnS are presumably encoded for the transcriptional regulation of the expression of the sdn gene cluster. This Sordaria araneosa (Pleurage araneosa) protein is Transcription factor sdnS.